A 356-amino-acid polypeptide reads, in one-letter code: MNIELLQQLCEASAVSGDEQEVRDILINTLEPCVNEITFDGLGSFVARKGNKGPKVAVVGHMDEVGFMVTHIDESGFLRFTTIGGWWNQSMLNHRVTIRTHKGVKIPGVIGSVAPHALTEKQKQQPLSFDEMFIDIGANSREEVEKRGVEIGNFISPEANFACWGEDKVVGKALDNRIGCAMMAELLQTVNNPEITLYGVGSVEEEVGLRGAQTSAEHIKPDVVIVLDTAVAGDVPGIDNIKYPLKLGQGPGLMLFDKRYFPNQKLVAALKSCAAHNDLPLQFSTMKTGATDGGRYNVMGGGRPVVALCLPTRYLHANSGMISKADYEALLTLIRGFLTTLTAEKVNAFSQFRQVD.

A divalent metal cation contacts are provided by His61 and Asp175. Catalysis depends on Glu205, which acts as the Proton acceptor. Glu206, Asp228, and His316 together coordinate a divalent metal cation.

This sequence belongs to the peptidase M42 family. It depends on a divalent metal cation as a cofactor.

This chain is Putative aminopeptidase FrvX (frvX), found in Escherichia coli (strain K12).